A 102-amino-acid polypeptide reads, in one-letter code: Small ribosomal subunit protein uS10 (102 aa).

This sequence belongs to the universal ribosomal protein uS10 family. Part of the 30S ribosomal subunit.

Involved in the binding of tRNA to the ribosomes. In Tropheryma whipplei (strain TW08/27) (Whipple's bacillus), this protein is Small ribosomal subunit protein uS10.